Consider the following 65-residue polypeptide: Large ribosomal subunit protein uL29 (65 aa).

This sequence belongs to the universal ribosomal protein uL29 family.

The chain is Large ribosomal subunit protein uL29 from Methylococcus capsulatus (strain ATCC 33009 / NCIMB 11132 / Bath).